The sequence spans 426 residues: Ornithine aminotransferase (426 aa).

Lysine 291 is modified (N6-(pyridoxal phosphate)lysine).

This sequence belongs to the class-III pyridoxal-phosphate-dependent aminotransferase family. It depends on pyridoxal 5'-phosphate as a cofactor.

The catalysed reaction is a 2-oxocarboxylate + L-ornithine = L-glutamate 5-semialdehyde + an L-alpha-amino acid. It functions in the pathway amino-acid biosynthesis; L-proline biosynthesis; L-glutamate 5-semialdehyde from L-ornithine: step 1/1. This is Ornithine aminotransferase from Vigna aconitifolia (Moth bean).